The following is a 412-amino-acid chain: Inositol polyphosphate-5-phosphatase A (412 aa).

A lipid anchor (S-farnesyl cysteine) is attached at Cys409. A propeptide spans 410 to 412 (VVQ) (removed in mature form).

The protein belongs to the inositol 1,4,5-trisphosphate 5-phosphatase type I family. As to quaternary structure, interacts with TASOR. Post-translationally, isoprenylation at Cys-409 is required for localization at the membrane. Expressed at high levels in cerebellar Purkinje cells (at protein level). Expressed in Sertoli cells of the testis.

The protein resides in the cell membrane. Its subcellular location is the cell projection. It localises to the dendrite. The enzyme catalyses 1D-myo-inositol 1,4,5-trisphosphate + H2O = 1D-myo-inositol 1,4-bisphosphate + phosphate. It catalyses the reaction 1D-myo-inositol 1,3,4,5-tetrakisphosphate + H2O = 1D-myo-inositol 1,3,4-trisphosphate + phosphate. Phosphatase that specifically hydrolyzes the 5-phosphate of inositol 1,4,5-trisphosphate to inositol 1,4-bisphosphate, and inositol 1,3,4,5-tetrasphosphate to inositol 1,3,4-trisphosphate. Plays a crucial role in the survival of cerebellar Purkinje cells. The polypeptide is Inositol polyphosphate-5-phosphatase A (Inpp5a) (Mus musculus (Mouse)).